We begin with the raw amino-acid sequence, 357 residues long: Biotin synthase (357 aa).

Residues 41-268 (NEVQISRLLS…KSRVRLSAGR (228 aa)) form the Radical SAM core domain. Cys-56, Cys-60, and Cys-63 together coordinate [4Fe-4S] cluster. Positions 100, 131, 191, and 263 each coordinate [2Fe-2S] cluster.

It belongs to the radical SAM superfamily. Biotin synthase family. In terms of assembly, homodimer. Requires [4Fe-4S] cluster as cofactor. [2Fe-2S] cluster is required as a cofactor.

The enzyme catalyses (4R,5S)-dethiobiotin + (sulfur carrier)-SH + 2 reduced [2Fe-2S]-[ferredoxin] + 2 S-adenosyl-L-methionine = (sulfur carrier)-H + biotin + 2 5'-deoxyadenosine + 2 L-methionine + 2 oxidized [2Fe-2S]-[ferredoxin]. It functions in the pathway cofactor biosynthesis; biotin biosynthesis; biotin from 7,8-diaminononanoate: step 2/2. Functionally, catalyzes the conversion of dethiobiotin (DTB) to biotin by the insertion of a sulfur atom into dethiobiotin via a radical-based mechanism. The sequence is that of Biotin synthase from Shewanella denitrificans (strain OS217 / ATCC BAA-1090 / DSM 15013).